The following is a 284-amino-acid chain: Cell division protein ZipA (284 aa).

A topological domain (periplasmic) is located at residue Met1. A helical transmembrane segment spans residues 2–22; it reads EIGLREWLIVIGIIVIAGILF. Topologically, residues 23–284 are cytoplasmic; it reads DGWRRMRGGK…FERRALTQKR (262 aa). Residues 47–140 are disordered; that stretch reads PDDEGSAELL…SASHSDKDQP (94 aa). Composition is skewed to basic and acidic residues over residues 62-75, 83-102, and 119-140; these read LDTH…EHDL, REPR…EPHQ, and SRDD…KDQP.

The protein belongs to the ZipA family. Interacts with FtsZ via their C-terminal domains.

The protein localises to the cell inner membrane. Functionally, essential cell division protein that stabilizes the FtsZ protofilaments by cross-linking them and that serves as a cytoplasmic membrane anchor for the Z ring. Also required for the recruitment to the septal ring of downstream cell division proteins. The chain is Cell division protein ZipA from Pseudomonas fluorescens (strain ATCC BAA-477 / NRRL B-23932 / Pf-5).